Consider the following 100-residue polypeptide: Urease subunit gamma (100 aa).

This sequence belongs to the urease gamma subunit family. Heterotrimer of UreA (gamma), UreB (beta) and UreC (alpha) subunits. Three heterotrimers associate to form the active enzyme.

Its subcellular location is the cytoplasm. It catalyses the reaction urea + 2 H2O + H(+) = hydrogencarbonate + 2 NH4(+). It participates in nitrogen metabolism; urea degradation; CO(2) and NH(3) from urea (urease route): step 1/1. This is Urease subunit gamma from Nostoc punctiforme (strain ATCC 29133 / PCC 73102).